Here is a 457-residue protein sequence, read N- to C-terminus: Ribosomal protein uS12 methylthiotransferase RimO (457 aa).

One can recognise an MTTase N-terminal domain in the interval 9-128 (KKVHFISLGC…ILKNSDEGEK (120 aa)). Cys-18, Cys-54, Cys-88, Cys-163, Cys-167, and Cys-170 together coordinate [4Fe-4S] cluster. The 236-residue stretch at 149-384 (SQPGHRAYLK…MEVQQNISRE (236 aa)) folds into the Radical SAM core domain. One can recognise a TRAM domain in the interval 387-455 (SDFVGKTLQV…EYDLIGEIVV (69 aa)).

It belongs to the methylthiotransferase family. RimO subfamily. [4Fe-4S] cluster serves as cofactor.

The protein resides in the cytoplasm. The catalysed reaction is L-aspartate(89)-[ribosomal protein uS12]-hydrogen + (sulfur carrier)-SH + AH2 + 2 S-adenosyl-L-methionine = 3-methylsulfanyl-L-aspartate(89)-[ribosomal protein uS12]-hydrogen + (sulfur carrier)-H + 5'-deoxyadenosine + L-methionine + A + S-adenosyl-L-homocysteine + 2 H(+). Its function is as follows. Catalyzes the methylthiolation of an aspartic acid residue of ribosomal protein uS12. The polypeptide is Ribosomal protein uS12 methylthiotransferase RimO (Bdellovibrio bacteriovorus (strain ATCC 15356 / DSM 50701 / NCIMB 9529 / HD100)).